The sequence spans 124 residues: MADLKAFAEQLVNLTIKEVSELTEILKTEYGIELATSSSVATGVSTSVVEVREEKTSFDLILKGVGTNKLAIVKLVKELTGLGLKEAKGIVDNAPAPLKEGITRNEAETLKKSLEEAGAEIDIR.

It belongs to the bacterial ribosomal protein bL12 family. Homodimer. Part of the ribosomal stalk of the 50S ribosomal subunit. Forms a multimeric L10(L12)X complex, where L10 forms an elongated spine to which 2 to 4 L12 dimers bind in a sequential fashion. Binds GTP-bound translation factors.

Its function is as follows. Forms part of the ribosomal stalk which helps the ribosome interact with GTP-bound translation factors. Is thus essential for accurate translation. This chain is Large ribosomal subunit protein bL12, found in Azobacteroides pseudotrichonymphae genomovar. CFP2.